Here is a 485-residue protein sequence, read N- to C-terminus: BTB/POZ domain-containing protein YLR108C (485 aa).

One can recognise a BTB domain in the interval 26–121; that stretch reads EVFKIRIGQK…LIKEYDYHFT (96 aa).

The protein resides in the nucleus. The protein is BTB/POZ domain-containing protein YLR108C of Saccharomyces cerevisiae (strain ATCC 204508 / S288c) (Baker's yeast).